The chain runs to 111 residues: Prostatic steroid-binding protein C1 (111 aa).

The signal sequence occupies residues 1–23 (MSTIKLSLCLLIMLAVCCYEANA).

This sequence belongs to the secretoglobin family. Lipophilin subfamily. In terms of assembly, prostatein is composed of three different peptides called C1, C2 and C3. These form covalent C1:C3 (F) and C2:C3 (S) heterodimers whose noncovalent association forms tetrameric (C1:C3/C3:C2) prostatein molecules.

It is found in the secreted. In terms of biological role, part of prostatein which is the major secretory glycoprotein of ventral prostate gland. This chain is Prostatic steroid-binding protein C1 (Psbpc1), found in Rattus norvegicus (Rat).